Consider the following 199-residue polypeptide: MLTETEGRVAVKLARKTIETLLLGGRVPGPRDAGTDLPPVFGENRGVFVTLTEKGMLRGCIGHPYPDSTLEQAIIDSAISAAVRDPRFPPVGGEELESLIVEVTILTQPEKINAPPKELPDKVEIGKHGLIVKQGYCQGLLLPQVAPENEMDSIDFLGHTCMKAGLSPDAWAKGAEVYCFEGQIFKEKEPEGEVIEEKF.

In terms of domain architecture, AMMECR1 spans 5–196 (TEGRVAVKLA…EKEPEGEVIE (192 aa)).

The sequence is that of Protein MA_3591 from Methanosarcina acetivorans (strain ATCC 35395 / DSM 2834 / JCM 12185 / C2A).